The primary structure comprises 699 residues: Ubiquitin-like modifier-activating enzyme ATG7 (699 aa).

The GXGXXG motif motif lies at 370-375 (GAGTLG). Cys550 serves as the catalytic Glycyl thioester intermediate. Residues 653 to 691 (ALASRDYVAELSGLAEVQRLAEKAAAEMQWSEDEEGMGE) are homodimerization.

The protein belongs to the ATG7 family. In terms of assembly, homodimer. Interacts with ATG8 through a thioester bond between Cys-550 and the C-terminal Gly of ATG8 and with ATG12 through a thioester bond between Cys-550 and the C-terminal Gly of ATG12. Also interacts with ATG3.

The protein resides in the cytoplasm. Its subcellular location is the preautophagosomal structure. Its function is as follows. E1-like activating enzyme involved in the 2 ubiquitin-like systems required for cytoplasm to vacuole transport (Cvt) and autophagy. Activates ATG12 for its conjugation with ATG5 and ATG8 for its conjugation with phosphatidylethanolamine. Both systems are needed for the ATG8 association to Cvt vesicles and autophagosomes membranes. Autophagy is essential for maintenance of amino acid levels and protein synthesis under nitrogen starvation. Required for selective autophagic degradation of the nucleus (nucleophagy) as well as for mitophagy which contributes to regulate mitochondrial quantity and quality by eliminating the mitochondria to a basal level to fulfill cellular energy requirements and preventing excess ROS production. Required for normal mycelial growth and conidiogenesis. This Sordaria macrospora (strain ATCC MYA-333 / DSM 997 / K(L3346) / K-hell) protein is Ubiquitin-like modifier-activating enzyme ATG7.